Reading from the N-terminus, the 789-residue chain is Aconitate hydratase, mitochondrial (789 aa).

The transit peptide at 1–32 directs the protein to the mitochondrion; the sequence is MFCKISRAPARMGSRIFTQSTLRSFSCAPVAA. Substrate contacts are provided by residues glutamine 106 and 199–201; that span reads DSH. [4Fe-4S] cluster is bound by residues cysteine 392, cysteine 455, and cysteine 458. Residues arginine 481, arginine 486, arginine 613, and 676 to 677 each bind substrate; that span reads SR.

This sequence belongs to the aconitase/IPM isomerase family. In terms of assembly, monomer. It depends on [4Fe-4S] cluster as a cofactor.

The protein resides in the mitochondrion. It carries out the reaction citrate = D-threo-isocitrate. It functions in the pathway carbohydrate metabolism; tricarboxylic acid cycle; isocitrate from oxaloacetate: step 2/2. Its function is as follows. Catalyzes the isomerization of citrate to isocitrate via cis-aconitate, a step in the citric acid cycle. In Schizosaccharomyces pombe (strain 972 / ATCC 24843) (Fission yeast), this protein is Aconitate hydratase, mitochondrial.